Here is a 103-residue protein sequence, read N- to C-terminus: Cyclotide vibi-K (103 aa).

An N-terminal signal peptide occupies residues 1–9 (AAFALPAFA). A propeptide spanning residues 10–69 (SFEKDVITPSVLEAVLNRKAPLSNIMMENDAILNVIANVKTVISNPVLEEALLKTNHGVN) is cleaved from the precursor. The cyclopeptide (Gly-Asn) cross-link spans 70 to 99 (GIPCGESCVWIPCLTSAVGCPCKSKVCYRN). 3 disulfide bridges follow: Cys73-Cys89, Cys77-Cys91, and Cys82-Cys96. Residues 100–103 (SLDN) constitute a propeptide that is removed on maturation.

Post-translationally, this is a cyclic peptide.

Probably participates in a plant defense mechanism. The polypeptide is Cyclotide vibi-K (Viola biflora (Yellow wood violet)).